A 338-amino-acid polypeptide reads, in one-letter code: Elongation factor Ts, mitochondrial (338 aa).

The N-terminal 55 residues, 1–55, are a transit peptide targeting the mitochondrion; that stretch reads MSLLRSLRLCLVARTGSCPLSALGPGPLLPSLQAGLPLLQSPQQWHTFHSGSWLS. An N6-succinyllysine mark is found at K89, K146, and K205. Phosphoserine is present on S283.

Belongs to the EF-Ts family.

Its subcellular location is the mitochondrion. Functionally, associates with the EF-Tu.GDP complex and induces the exchange of GDP to GTP. It remains bound to the aminoacyl-tRNA.EF-Tu.GTP complex up to the GTP hydrolysis stage on the ribosome. The protein is Elongation factor Ts, mitochondrial of Bos taurus (Bovine).